We begin with the raw amino-acid sequence, 306 residues long: NADH-cytochrome b5 reductase 2-B (306 aa).

Residues Pro12 to Gly32 traverse the membrane as a helical segment. The FAD-binding FR-type domain occupies Ser53–Lys157. An FAD-binding site is contributed by Lys160–Leu195.

The protein belongs to the flavoprotein pyridine nucleotide cytochrome reductase family. FAD serves as cofactor.

The protein localises to the mitochondrion outer membrane. It carries out the reaction 2 Fe(III)-[cytochrome b5] + NADH = 2 Fe(II)-[cytochrome b5] + NAD(+) + H(+). May mediate the reduction of outer membrane cytochrome b5. In Vanderwaltozyma polyspora (strain ATCC 22028 / DSM 70294 / BCRC 21397 / CBS 2163 / NBRC 10782 / NRRL Y-8283 / UCD 57-17) (Kluyveromyces polysporus), this protein is NADH-cytochrome b5 reductase 2-B (MCR1B).